The primary structure comprises 384 residues: MATPVEPPNGIRTPGKHYYSMWQSLFEIDTKYVPIKPIGRGAYGIVCSSVNRETNEKVAIKKINNAFENRIDALRTLRELKLLRHLRHENVIALKDVMMPIQRRSFKDVYLVYELMDTDLHQIIKSSQTLSNDHCQYFLFQLLRGLKYLHSANILHRDLKPGNLLINANCDLKICDFGLARTSSGKDQFMTEYVVTRWYRAPELLLCCDNYGTSIDVWSVGCIFADVLGRKPVFPGTECLNQLKLIINILGSQREEDIEFIDNPKARKYIKSLPYSPGTPFSRLYPNAHPLAIDLLQRMLVFDPSKRISVMEALQHPYMSPLYDPNTDPPAQVPINLDIDEDLVEETIREMMWEEILHYHPEAAVALLWKLFYELLLVPSRHRP.

The Protein kinase domain occupies 32-319; sequence YVPIKPIGRG…VMEALQHPYM (288 aa). Residues 38–46 and K61 contribute to the ATP site; that span reads IGRGAYGIV. D158 (proton acceptor) is an active-site residue. T191 bears the Phosphothreonine mark. The TXY signature appears at 191 to 193; the sequence is TEY. Y193 carries the phosphotyrosine modification.

The protein belongs to the protein kinase superfamily. CMGC Ser/Thr protein kinase family. MAP kinase subfamily. Mg(2+) is required as a cofactor. Post-translationally, dually phosphorylated on Thr-191 and Tyr-193, which activates the enzyme. As to expression, expressed in vegetative organs such as leaf, root, or stem. In the reproductive organs, it is found in the ovary, but not in the stamen.

It carries out the reaction L-seryl-[protein] + ATP = O-phospho-L-seryl-[protein] + ADP + H(+). The catalysed reaction is L-threonyl-[protein] + ATP = O-phospho-L-threonyl-[protein] + ADP + H(+). Its activity is regulated as follows. Activated by tyrosine and threonine phosphorylation. This Petunia hybrida (Petunia) protein is Mitogen-activated protein kinase homolog 1 (MPK1).